An 814-amino-acid polypeptide reads, in one-letter code: DNA gyrase subunit A (814 aa).

One can recognise a Topo IIA-type catalytic domain in the interval 32–499; that stretch reads LPDVRDGLKP…GVIEFREEDL (468 aa). Tyr120 (O-(5'-phospho-DNA)-tyrosine intermediate) is an active-site residue. The GyrA-box signature appears at 526–532; sequence QHRAGRG.

The protein belongs to the type II topoisomerase GyrA/ParC subunit family. Heterotetramer, composed of two GyrA and two GyrB chains. In the heterotetramer, GyrA contains the active site tyrosine that forms a transient covalent intermediate with DNA, while GyrB binds cofactors and catalyzes ATP hydrolysis.

It localises to the cytoplasm. The enzyme catalyses ATP-dependent breakage, passage and rejoining of double-stranded DNA.. In terms of biological role, a type II topoisomerase that negatively supercoils closed circular double-stranded (ds) DNA in an ATP-dependent manner to modulate DNA topology and maintain chromosomes in an underwound state. Negative supercoiling favors strand separation, and DNA replication, transcription, recombination and repair, all of which involve strand separation. Also able to catalyze the interconversion of other topological isomers of dsDNA rings, including catenanes and knotted rings. Type II topoisomerases break and join 2 DNA strands simultaneously in an ATP-dependent manner. This Dehalogenimonas lykanthroporepellens (strain ATCC BAA-1523 / JCM 15061 / BL-DC-9) protein is DNA gyrase subunit A.